The following is a 122-amino-acid chain: Large ribosomal subunit protein uL14 (122 aa).

It belongs to the universal ribosomal protein uL14 family. As to quaternary structure, part of the 50S ribosomal subunit. Forms a cluster with proteins L3 and L19. In the 70S ribosome, L14 and L19 interact and together make contacts with the 16S rRNA in bridges B5 and B8.

Functionally, binds to 23S rRNA. Forms part of two intersubunit bridges in the 70S ribosome. In Clostridium kluyveri (strain ATCC 8527 / DSM 555 / NBRC 12016 / NCIMB 10680 / K1), this protein is Large ribosomal subunit protein uL14.